Here is a 396-residue protein sequence, read N- to C-terminus: Lipid-A-disaccharide synthase (396 aa).

This sequence belongs to the LpxB family.

It catalyses the reaction a lipid X + a UDP-2-N,3-O-bis[(3R)-3-hydroxyacyl]-alpha-D-glucosamine = a lipid A disaccharide + UDP + H(+). It functions in the pathway bacterial outer membrane biogenesis; LPS lipid A biosynthesis. Its function is as follows. Condensation of UDP-2,3-diacylglucosamine and 2,3-diacylglucosamine-1-phosphate to form lipid A disaccharide, a precursor of lipid A, a phosphorylated glycolipid that anchors the lipopolysaccharide to the outer membrane of the cell. The sequence is that of Lipid-A-disaccharide synthase from Nitrobacter hamburgensis (strain DSM 10229 / NCIMB 13809 / X14).